Consider the following 229-residue polypeptide: Potassium/proton antiporter CemA (229 aa).

Helical transmembrane passes span 7-27, 114-134, 154-174, and 189-209; these read FTPLLYLASIVFLPWWISLSL, IICFVILSGYSILGNEELLIL, ILLLTDLCIGFHSPHGWELMI, and IISGLVSTFPVILDTILKYWI.

Belongs to the CemA family.

It is found in the plastid. It localises to the chloroplast inner membrane. The catalysed reaction is K(+)(in) + H(+)(out) = K(+)(out) + H(+)(in). Its function is as follows. Contributes to K(+)/H(+) antiport activity by supporting proton efflux to control proton extrusion and homeostasis in chloroplasts in a light-dependent manner to modulate photosynthesis. Prevents excessive induction of non-photochemical quenching (NPQ) under continuous-light conditions. Indirectly promotes efficient inorganic carbon uptake into chloroplasts. This is Potassium/proton antiporter CemA from Vitis vinifera (Grape).